Consider the following 449-residue polypeptide: Ribulose bisphosphate carboxylase large chain (449 aa).

Lys7 carries the N6,N6,N6-trimethyllysine modification. 2 residues coordinate substrate: Asn116 and Thr166. The active-site Proton acceptor is the Lys168. Substrate is bound at residue Lys170. Residues Lys194, Asp196, and Glu197 each contribute to the Mg(2+) site. N6-carboxylysine is present on Lys194. His287 (proton acceptor) is an active-site residue. Positions 288, 320, and 372 each coordinate substrate.

The protein belongs to the RuBisCO large chain family. Type I subfamily. As to quaternary structure, heterohexadecamer of 8 large chains and 8 small chains; disulfide-linked. The disulfide link is formed within the large subunit homodimers. The cofactor is Mg(2+). The disulfide bond which can form in the large chain dimeric partners within the hexadecamer appears to be associated with oxidative stress and protein turnover.

Its subcellular location is the plastid. The protein resides in the chloroplast. It catalyses the reaction 2 (2R)-3-phosphoglycerate + 2 H(+) = D-ribulose 1,5-bisphosphate + CO2 + H2O. It carries out the reaction D-ribulose 1,5-bisphosphate + O2 = 2-phosphoglycolate + (2R)-3-phosphoglycerate + 2 H(+). In terms of biological role, ruBisCO catalyzes two reactions: the carboxylation of D-ribulose 1,5-bisphosphate, the primary event in carbon dioxide fixation, as well as the oxidative fragmentation of the pentose substrate in the photorespiration process. Both reactions occur simultaneously and in competition at the same active site. This Liriope muscari (Big blue lilyturf) protein is Ribulose bisphosphate carboxylase large chain.